The chain runs to 519 residues: Protein twist (519 aa).

4 disordered regions span residues 53–77 (MQQQ…QQQY), 131–156 (NFEQ…VATA), 301–321 (YEAY…SDRD), and 368–389 (FRKP…DEFS). Low complexity-rich tracts occupy residues 54-76 (QQQQ…QQQQ) and 134-146 (QQQQ…QQQQ). Polar residues predominate over residues 308-317 (NSLNGSTYSS). The segment covering 368–379 (FRKPRRRLKRKP) has biased composition (basic residues). Positions 390 to 441 (NQRVMANVRERQRTQSLNDAFKALQQIIPTLPSDKLSKIQTLKLATRYIDFL) constitute a bHLH domain.

In terms of assembly, efficient DNA binding requires dimerization with another bHLH protein. Homodimer.

It localises to the nucleus. Its function is as follows. Involved in the establishment and dorsoventral patterning of germ layers in the embryo. This Drosophila virilis (Fruit fly) protein is Protein twist.